Consider the following 473-residue polypeptide: Photosystem II CP43 reaction center protein (473 aa).

The propeptide occupies 1–14 (MKTLYSLRRFYPVE). The residue at position 15 (Thr15) is an N-acetylthreonine. A Phosphothreonine modification is found at Thr15. The next 5 membrane-spanning stretches (helical) occupy residues 69–93 (LFEV…PHLA), 134–155 (LLGP…KDRN), 178–200 (KALY…RKIT), 255–275 (KPFA…LSYS), and 291–312 (WFNN…ASQA). [CaMn4O5] cluster is bound at residue Glu367. A helical transmembrane segment spans residues 447–471 (RARAAAAGFEKGIDRDLEPVLSMTP).

This sequence belongs to the PsbB/PsbC family. PsbC subfamily. In terms of assembly, PSII is composed of 1 copy each of membrane proteins PsbA, PsbB, PsbC, PsbD, PsbE, PsbF, PsbH, PsbI, PsbJ, PsbK, PsbL, PsbM, PsbT, PsbX, PsbY, PsbZ, Psb30/Ycf12, at least 3 peripheral proteins of the oxygen-evolving complex and a large number of cofactors. It forms dimeric complexes. It depends on Binds multiple chlorophylls and provides some of the ligands for the Ca-4Mn-5O cluster of the oxygen-evolving complex. It may also provide a ligand for a Cl- that is required for oxygen evolution. PSII binds additional chlorophylls, carotenoids and specific lipids. as a cofactor.

It localises to the plastid. The protein localises to the chloroplast thylakoid membrane. Its function is as follows. One of the components of the core complex of photosystem II (PSII). It binds chlorophyll and helps catalyze the primary light-induced photochemical processes of PSII. PSII is a light-driven water:plastoquinone oxidoreductase, using light energy to abstract electrons from H(2)O, generating O(2) and a proton gradient subsequently used for ATP formation. The polypeptide is Photosystem II CP43 reaction center protein (Dioscorea elephantipes (Elephant's foot yam)).